The following is a 570-amino-acid chain: MSEKHPGPLVVEGKLTDAERMKLESNYLRGTIAEDLNDGLTGGFKGDNFLLIRFHGMYQQDDRDIRAERAEQKLEPRHAMLLRCRLPGGVITTKQWQAIDKFAGENTIYGSIRLTNRQTFQFHGILKKNVKPVHQMLHSVGLDALATANDMNRNVLCTSNPYESQLHAEAYEWAKKISEHLLPRTRAYAEIWLDQEKVATTDEEPILGQTYLPRKFKTTVVIPPQNDIDLHANDMNFVAIAENGKLVGFNLLVGGGLSIEHGNKKTYARTASEFGYLPLEHTLAVAEAVVTTQRDWGNRTDRKNAKTKYTLERVGVETFKAEVERRAGIKFEPIRPYEFTGRGDRIGWVKGIDDNWHLTLFIENGRILDYPGRPLKTGLLEIAKIHKGDFRITANQNLIITGVPESEKAKIEKIAKESGLMNAVTPQRENSMACVSFPTCPLAMAEAERFLPSFIDNIDNLMAKHGVSDEHIVMRVTGCPNGCGRAMLAEVGLVGKAPGRYNLHLGGNRIGTRIPRMYKENITEPEILASLDELIGRWAKEREAGEGFGDFTVRAGIIRPVLDPARDLWD.

[4Fe-4S] cluster contacts are provided by C434, C440, C479, and C483. C483 provides a ligand contact to siroheme.

This sequence belongs to the nitrite and sulfite reductase 4Fe-4S domain family. As to quaternary structure, alpha(8)-beta(8). The alpha component is a flavoprotein, the beta component is a hemoprotein. The cofactor is siroheme. It depends on [4Fe-4S] cluster as a cofactor.

It catalyses the reaction hydrogen sulfide + 3 NADP(+) + 3 H2O = sulfite + 3 NADPH + 4 H(+). It functions in the pathway sulfur metabolism; hydrogen sulfide biosynthesis; hydrogen sulfide from sulfite (NADPH route): step 1/1. Its function is as follows. Component of the sulfite reductase complex that catalyzes the 6-electron reduction of sulfite to sulfide. This is one of several activities required for the biosynthesis of L-cysteine from sulfate. This chain is Sulfite reductase [NADPH] hemoprotein beta-component, found in Shigella sonnei (strain Ss046).